The sequence spans 105 residues: Large ribosomal subunit protein mL49 (105 aa).

The N-terminal 15 residues, 1 to 15 (MRSSLKPVLSNLRFN), are a transit peptide targeting the mitochondrion.

It belongs to the mitochondrion-specific ribosomal protein mL49 family. In terms of assembly, component of the mitochondrial large ribosomal subunit (mt-LSU). Mature yeast 74S mitochondrial ribosomes consist of a small (37S) and a large (54S) subunit. The 37S small subunit contains a 15S ribosomal RNA (15S mt-rRNA) and at least 32 different proteins. The 54S large subunit contains a 21S rRNA (21S mt-rRNA) and at least 45 different proteins.

It localises to the mitochondrion. Component of the mitochondrial ribosome (mitoribosome), a dedicated translation machinery responsible for the synthesis of mitochondrial genome-encoded proteins, including at least some of the essential transmembrane subunits of the mitochondrial respiratory chain. The mitoribosomes are attached to the mitochondrial inner membrane and translation products are cotranslationally integrated into the membrane. This chain is Large ribosomal subunit protein mL49 (img2), found in Schizosaccharomyces pombe (strain 972 / ATCC 24843) (Fission yeast).